We begin with the raw amino-acid sequence, 143 residues long: Myocilin opposite strand protein (143 aa).

The segment at 65-111 (MATRDETITKKSGEGEEMLPSMGMDHESPSKAHLMVPPAPPPSPADA) is disordered. A compositionally biased stretch (basic and acidic residues) spans 66–78 (ATRDETITKKSGE).

The protein is Myocilin opposite strand protein of Mus musculus (Mouse).